A 25-amino-acid chain; its full sequence is Hemocyanin subunit 2 (25 aa).

This sequence belongs to the tyrosinase family. Hemocyanin subfamily. Hemolymph.

Its subcellular location is the secreted. It is found in the extracellular space. Hemocyanins are copper-containing oxygen carriers occurring freely dissolved in the hemolymph of many mollusks and arthropods. In Carcinus maenas (Common shore crab), this protein is Hemocyanin subunit 2.